The sequence spans 194 residues: Peptidyl-tRNA hydrolase (194 aa).

Tyrosine 17 provides a ligand contact to tRNA. Histidine 22 serves as the catalytic Proton acceptor. Phenylalanine 68, asparagine 70, and asparagine 116 together coordinate tRNA.

This sequence belongs to the PTH family. As to quaternary structure, monomer.

It localises to the cytoplasm. The catalysed reaction is an N-acyl-L-alpha-aminoacyl-tRNA + H2O = an N-acyl-L-amino acid + a tRNA + H(+). Its function is as follows. Hydrolyzes ribosome-free peptidyl-tRNAs (with 1 or more amino acids incorporated), which drop off the ribosome during protein synthesis, or as a result of ribosome stalling. In terms of biological role, catalyzes the release of premature peptidyl moieties from peptidyl-tRNA molecules trapped in stalled 50S ribosomal subunits, and thus maintains levels of free tRNAs and 50S ribosomes. This chain is Peptidyl-tRNA hydrolase, found in Actinobacillus succinogenes (strain ATCC 55618 / DSM 22257 / CCUG 43843 / 130Z).